The sequence spans 493 residues: Dynein regulatory complex subunit 2 (493 aa).

Coiled-coil stretches lie at residues Asp-99 to Ile-163 and Lys-253 to Gly-280.

This sequence belongs to the DRC2 family. As to quaternary structure, component of the nexin-dynein regulatory complex (N-DRC). Interacts with DRC1.

It localises to the cytoplasm. It is found in the cytoskeleton. The protein localises to the flagellum basal body. The protein resides in the cell projection. Its subcellular location is the cilium. It localises to the flagellum. It is found in the flagellum axoneme. Functionally, component of the nexin-dynein regulatory complex (N-DRC), a key regulator of ciliary/flagellar motility which maintains the alignment and integrity of the distal axoneme and regulates microtubule sliding in motile axonemes. Plays a critical role in the assembly of N-DRC and also stabilizes the assembly of multiple inner dynein arms and radial spokes. Coassembles with DRC1 to form a central scaffold needed for assembly of the N-DRC and its attachment to the outer doublet microtubules. The chain is Dynein regulatory complex subunit 2 (Ccdc65) from Mus musculus (Mouse).